A 272-amino-acid polypeptide reads, in one-letter code: Dermonecrotic toxin StSicTox-betaIC1 (272 aa).

Residue His5 is part of the active site. 2 residues coordinate Mg(2+): Glu25 and Asp27. His41 functions as the Nucleophile in the catalytic mechanism. Cystine bridges form between Cys45–Cys51 and Cys47–Cys191. Asp85 is a binding site for Mg(2+).

It belongs to the arthropod phospholipase D family. Class II subfamily. Class IIb sub-subfamily. It depends on Mg(2+) as a cofactor. Expressed by the venom gland.

It is found in the secreted. It carries out the reaction an N-(acyl)-sphingosylphosphocholine = an N-(acyl)-sphingosyl-1,3-cyclic phosphate + choline. It catalyses the reaction N-hexanoyl-sphing-4-enine-1-phosphocholine = N-(hexanoyl)-sphing-4-enine-1,3-cyclic phosphate + choline. The enzyme catalyses an N-(acyl)-sphingosylphosphoethanolamine = an N-(acyl)-sphingosyl-1,3-cyclic phosphate + ethanolamine. The catalysed reaction is N-dodecanoyl-heptadecasphing-4-enine-1-phosphoethanolamine = N-dodecanoyl-heptadecasphing-4-enine-1,3-cyclic phosphate + ethanolamine. It carries out the reaction a 1-acyl-sn-glycero-3-phosphoethanolamine = a 1-acyl-sn-glycero-2,3-cyclic phosphate + ethanolamine. It catalyses the reaction 1-tetradecanoyl-sn-glycero-3-phosphoethanolamine = 1-tetradecanoyl-sn-glycero-2,3-cyclic phosphate + ethanolamine. In terms of biological role, dermonecrotic toxins cleave the phosphodiester linkage between the phosphate and headgroup of certain phospholipids (sphingolipid and lysolipid substrates), forming an alcohol (often choline) and a cyclic phosphate. This toxin acts on lysophosphatidylethanolamine (LPE) and ceramide phosphoethanolamine (CPE) with high activity. This toxin acts on sphingomyelin (SM) with very low activity and is not active on lysophosphatidylserine (LPS), lysophosphatidylcholine (LPC) and lysophosphatidylglycerol (LPG). It acts by transphosphatidylation, releasing exclusively cyclic phosphate as second products. It is not surprising that spider toxins have affinity for ethanolamine-containing sphingolipids since they are common in insect prey. Induces dermonecrosis, hemolysis, increased vascular permeability, edema, inflammatory response, and platelet aggregation. This is Dermonecrotic toxin StSicTox-betaIC1 from Sicarius terrosus (Cave spider).